The chain runs to 203 residues: Thymidylate kinase (203 aa).

10–17 (GIDGCGKT) contacts ATP.

It belongs to the thymidylate kinase family.

It carries out the reaction dTMP + ATP = dTDP + ADP. Phosphorylation of dTMP to form dTDP in both de novo and salvage pathways of dTTP synthesis. This chain is Thymidylate kinase, found in Thermoanaerobacter pseudethanolicus (strain ATCC 33223 / 39E) (Clostridium thermohydrosulfuricum).